Consider the following 470-residue polypeptide: Glutamate--tRNA ligase (470 aa).

A 'HIGH' region motif is present at residues P9–G19. The 'KMSKS' region motif lies at K236 to R240. K239 is an ATP binding site.

This sequence belongs to the class-I aminoacyl-tRNA synthetase family. Glutamate--tRNA ligase type 1 subfamily. As to quaternary structure, monomer.

It is found in the cytoplasm. The enzyme catalyses tRNA(Glu) + L-glutamate + ATP = L-glutamyl-tRNA(Glu) + AMP + diphosphate. Its function is as follows. Catalyzes the attachment of glutamate to tRNA(Glu) in a two-step reaction: glutamate is first activated by ATP to form Glu-AMP and then transferred to the acceptor end of tRNA(Glu). This Psychromonas ingrahamii (strain DSM 17664 / CCUG 51855 / 37) protein is Glutamate--tRNA ligase.